The sequence spans 426 residues: Serine--tRNA ligase (426 aa).

231–233 serves as a coordination point for L-serine; that stretch reads TAE. 262-264 is an ATP binding site; sequence RAE. An L-serine-binding site is contributed by glutamate 285. Position 349–352 (349–352) interacts with ATP; that stretch reads EISS. Serine 385 contributes to the L-serine binding site.

This sequence belongs to the class-II aminoacyl-tRNA synthetase family. Type-1 seryl-tRNA synthetase subfamily. In terms of assembly, homodimer. The tRNA molecule binds across the dimer.

It is found in the cytoplasm. The enzyme catalyses tRNA(Ser) + L-serine + ATP = L-seryl-tRNA(Ser) + AMP + diphosphate + H(+). It carries out the reaction tRNA(Sec) + L-serine + ATP = L-seryl-tRNA(Sec) + AMP + diphosphate + H(+). The protein operates within aminoacyl-tRNA biosynthesis; selenocysteinyl-tRNA(Sec) biosynthesis; L-seryl-tRNA(Sec) from L-serine and tRNA(Sec): step 1/1. Functionally, catalyzes the attachment of serine to tRNA(Ser). Is also able to aminoacylate tRNA(Sec) with serine, to form the misacylated tRNA L-seryl-tRNA(Sec), which will be further converted into selenocysteinyl-tRNA(Sec). The polypeptide is Serine--tRNA ligase (Myxococcus xanthus (strain DK1622)).